Consider the following 22-residue polypeptide: MNRIGMITTIITTTITTGNGAG.

This sequence belongs to the thr operon leader peptide family.

Its function is as follows. This protein is involved in control of the biosynthesis of threonine. The protein is thr operon leader peptide of Klebsiella pneumoniae (strain 342).